Consider the following 361-residue polypeptide: Putative agmatine deiminase (361 aa).

The active-site Amidino-cysteine intermediate is C354.

The protein belongs to the agmatine deiminase family.

The catalysed reaction is agmatine + H2O = N-carbamoylputrescine + NH4(+). This Streptococcus pneumoniae (strain ATCC 700669 / Spain 23F-1) protein is Putative agmatine deiminase.